The primary structure comprises 479 residues: Chromosomal replication initiator protein DnaA (479 aa).

Residues 1–74 (MFSGVVMAWQ…RSLTGVDSSI (74 aa)) are domain I, interacts with DnaA modulators. Positions 74–142 (ITDVRFLEKK…SVPKNNASIR (69 aa)) are domain II. Positions 143-360 (ALHPRYTFDE…SAITAIGARA (218 aa)) are domain III, AAA+ region. ATP-binding residues include glycine 187, glycine 189, lysine 190, and serine 191. The domain IV, binds dsDNA stretch occupies residues 361–479 (RLMGGYIDMN…NLLSDKVKQI (119 aa)).

This sequence belongs to the DnaA family. Oligomerizes as a right-handed, spiral filament on DNA at oriC.

It is found in the cytoplasm. Functionally, plays an essential role in the initiation and regulation of chromosomal replication. ATP-DnaA binds to the origin of replication (oriC) to initiate formation of the DNA replication initiation complex once per cell cycle. Binds the DnaA box (a 9 base pair repeat at the origin) and separates the double-stranded (ds)DNA. Forms a right-handed helical filament on oriC DNA; dsDNA binds to the exterior of the filament while single-stranded (ss)DNA is stabiized in the filament's interior. The ATP-DnaA-oriC complex binds and stabilizes one strand of the AT-rich DNA unwinding element (DUE), permitting loading of DNA polymerase. After initiation quickly degrades to an ADP-DnaA complex that is not apt for DNA replication. Binds acidic phospholipids. In Desulfotalea psychrophila (strain LSv54 / DSM 12343), this protein is Chromosomal replication initiator protein DnaA.